A 406-amino-acid polypeptide reads, in one-letter code: Probable tRNA pseudouridine synthase D (406 aa).

The Nucleophile role is filled by Asp-77. In terms of domain architecture, TRUD spans 150–371 (GFPNYFGIQR…PGGRRELLIK (222 aa)).

This sequence belongs to the pseudouridine synthase TruD family.

It catalyses the reaction uridine(13) in tRNA = pseudouridine(13) in tRNA. Could be responsible for synthesis of pseudouridine from uracil-13 in transfer RNAs. The chain is Probable tRNA pseudouridine synthase D from Pyrococcus abyssi (strain GE5 / Orsay).